The sequence spans 250 residues: Probable transcriptional regulatory protein SACE_2018 (250 aa).

This sequence belongs to the TACO1 family.

The protein localises to the cytoplasm. The protein is Probable transcriptional regulatory protein SACE_2018 of Saccharopolyspora erythraea (strain ATCC 11635 / DSM 40517 / JCM 4748 / NBRC 13426 / NCIMB 8594 / NRRL 2338).